The primary structure comprises 560 residues: Zinc finger protein 619 (560 aa).

C2H2-type zinc fingers lie at residues 188 to 210 (YKCG…QRVH), 216 to 238 (YTCK…QKIH), 244 to 266 (YSCE…QKLH), 272 to 294 (YECT…QRIH), 300 to 322 (FKCK…ERIH), 328 to 350 (YECK…QRIH), 356 to 378 (YECK…QRFH), 384 to 406 (YKCN…QRIH), 412 to 434 (YECQ…QRVH), and 440 to 462 (YECK…QKWH).

Belongs to the krueppel C2H2-type zinc-finger protein family.

The protein resides in the nucleus. Its function is as follows. May be involved in transcriptional regulation. The protein is Zinc finger protein 619 (ZNF619) of Homo sapiens (Human).